Here is a 308-residue protein sequence, read N- to C-terminus: Putative S-adenosyl-L-methionine-dependent methyltransferase Mb3816c (308 aa).

S-adenosyl-L-methionine contacts are provided by residues D131 and 160-161 (DL).

It belongs to the UPF0677 family.

Functionally, exhibits S-adenosyl-L-methionine-dependent methyltransferase activity. The polypeptide is Putative S-adenosyl-L-methionine-dependent methyltransferase Mb3816c (Mycobacterium bovis (strain ATCC BAA-935 / AF2122/97)).